Here is a 999-residue protein sequence, read N- to C-terminus: Hypoxia up-regulated protein 1 (999 aa).

The first 32 residues, 1–32, serve as a signal peptide directing secretion; it reads MAATVRRQRPRRLLCWTLVAVLLADLLALSDT. Residues asparagine 155, asparagine 222, and asparagine 515 are each glycosylated (N-linked (GlcNAc...) asparagine). The segment at 564–694 is disordered; sequence VEDSPEEEST…KKQKPARKQK (131 aa). At serine 567 the chain carries Phosphoserine. The segment covering 574 to 583 has biased composition (polar residues); sequence LTKLGNTISS. A glycan (N-linked (GlcNAc...) asparagine) is linked at asparagine 596. Composition is skewed to basic and acidic residues over residues 611-626 and 641-670; these read GSKD…KEET and PKGD…EEKG. Residues asparagine 830, asparagine 862, and asparagine 869 are each glycosylated (N-linked (GlcNAc...) asparagine). Lysine 883 bears the N6-acetyllysine mark. The tract at residues 909–999 is disordered; it reads AKFTKPRPRP…QKRSSKNDEL (91 aa). Residues asparagine 922 and asparagine 931 are each glycosylated (N-linked (GlcNAc...) asparagine). Residues 949–962 are compositionally biased toward basic and acidic residues; sequence EEAKPILEPDKEET. Positions 996–999 match the Prevents secretion from ER motif; sequence NDEL.

The protein belongs to the heat shock protein 70 family. As to quaternary structure, part of a large chaperone multiprotein complex comprising DNAJB11, HSP90B1, HSPA5, HYOU, PDIA2, PDIA4, PDIA6, PPIB, SDF2L1, UGGT1 and very small amounts of ERP29, but not, or at very low levels, CALR nor CANX.

Its subcellular location is the endoplasmic reticulum lumen. Functionally, has a pivotal role in cytoprotective cellular mechanisms triggered by oxygen deprivation. Promotes HSPA5/BiP-mediated ATP nucleotide exchange and thereby activates the unfolded protein response (UPR) pathway in the presence of endoplasmic reticulum stress. May play a role as a molecular chaperone and participate in protein folding. In Cricetulus griseus (Chinese hamster), this protein is Hypoxia up-regulated protein 1 (HYOU1).